Here is a 367-residue protein sequence, read N- to C-terminus: Tetraacyldisaccharide 4'-kinase (367 aa).

An ATP-binding site is contributed by 68–75 (VLGGSGKT).

The protein belongs to the LpxK family.

It catalyses the reaction a lipid A disaccharide + ATP = a lipid IVA + ADP + H(+). Its pathway is glycolipid biosynthesis; lipid IV(A) biosynthesis; lipid IV(A) from (3R)-3-hydroxytetradecanoyl-[acyl-carrier-protein] and UDP-N-acetyl-alpha-D-glucosamine: step 6/6. Transfers the gamma-phosphate of ATP to the 4'-position of a tetraacyldisaccharide 1-phosphate intermediate (termed DS-1-P) to form tetraacyldisaccharide 1,4'-bis-phosphate (lipid IVA). The sequence is that of Tetraacyldisaccharide 4'-kinase from Chlamydia abortus (strain DSM 27085 / S26/3) (Chlamydophila abortus).